Reading from the N-terminus, the 929-residue chain is Protein translocase subunit SecA (929 aa).

ATP contacts are provided by residues Q83, 101 to 105 (GEGKT), and D491.

The protein belongs to the SecA family. In terms of assembly, monomer and homodimer. Part of the essential Sec protein translocation apparatus which comprises SecA, SecYEG and auxiliary proteins SecDF. Other proteins may also be involved.

Its subcellular location is the cell inner membrane. The protein resides in the cellular thylakoid membrane. The protein localises to the cytoplasm. It catalyses the reaction ATP + H2O + cellular proteinSide 1 = ADP + phosphate + cellular proteinSide 2.. In terms of biological role, part of the Sec protein translocase complex. Interacts with the SecYEG preprotein conducting channel. Has a central role in coupling the hydrolysis of ATP to the transfer of proteins into and across the cell membrane, serving as an ATP-driven molecular motor driving the stepwise translocation of polypeptide chains across the membrane. Functionally, probably participates in protein translocation into and across both the cytoplasmic and thylakoid membranes in cyanobacterial cells. The polypeptide is Protein translocase subunit SecA (Thermosynechococcus vestitus (strain NIES-2133 / IAM M-273 / BP-1)).